The primary structure comprises 858 residues: Protein translocase subunit SecA (858 aa).

Residues glutamine 88, 106-110, and aspartate 494 contribute to the ATP site; that span reads GEGKT. Residues 808–848 are disordered; it reads KEDRGQLSYSGGGNAEDARNTPAKAAPRIGRNDPCPCGSGR. Cysteine 842, cysteine 844, cysteine 853, and cysteine 854 together coordinate Zn(2+).

It belongs to the SecA family. As to quaternary structure, monomer and homodimer. Part of the essential Sec protein translocation apparatus which comprises SecA, SecYEG and auxiliary proteins SecDF-YajC and YidC. It depends on Zn(2+) as a cofactor.

Its subcellular location is the cell inner membrane. The protein resides in the cytoplasm. The catalysed reaction is ATP + H2O + cellular proteinSide 1 = ADP + phosphate + cellular proteinSide 2.. Functionally, part of the Sec protein translocase complex. Interacts with the SecYEG preprotein conducting channel. Has a central role in coupling the hydrolysis of ATP to the transfer of proteins into and across the cell membrane, serving as an ATP-driven molecular motor driving the stepwise translocation of polypeptide chains across the membrane. This chain is Protein translocase subunit SecA, found in Desulfovibrio desulfuricans (strain ATCC 27774 / DSM 6949 / MB).